A 926-amino-acid polypeptide reads, in one-letter code: MVMADGPRHLQRGPVRVGFYDIEGTLGKGNFAVVKLGRHRITKTEVAIKIIDKSQLDAVNLEKIYREVQIMKMLDHPHIIKLYQVMETKSMLYLVTEYAKNGEIFDYLANHGRLNESEARRKFWQILSAVDYCHGRKIVHRDLKAENLLLDNNMNIKIADFGFGNFFKSGELLATWCGSPPYAAPEVFEGQQYEGPQLDIWSMGVVLYVLVCGALPFDGPTLPILRQRVLEGRFRIPYFMSEDCEHLIRRMLVLDPSKRLTIAQIKEHKWMLIEVPVQRPVLYPQEQENEPSIGEFNEQVLRLMHSLGIDQQKTIESLQNKSYNHFAAIYFLLVERLKSHRSSFPVEQRLDGRQRRPSTIAEQTVAKAQTVGLPVTMHSPNMRLLRSALLPQASNVEAFSFPASGCQAEAAFMEEECVDTPKVNGCLLDPVPPVLVRKGCQSLPSNMMETSIDEGLETEGEAEEDPAHAFEAFQSTRSGQRRHTLSEVTNQLVVMPGAGKIFSMNDSPSLDSVDSEYDMGSVQRDLNFLEDNPSLKDIMLANQPSPRMTSPFISLRPTNPAMQALSSQKREVHNRSPVSFREGRRASDTSLTQGIVAFRQHLQNLARTKGILELNKVQLLYEQIGPEADPNLAPAAPQLQDLASSCPQEEVSQQQESVSTLPASVHPQLSPRQSLETQYLQHRLQKPSLLSKAQNTCQLYCKEPPRSLEQQLQEHRLQQKRLFLQKQSQLQAYFNQMQIAESSYPQPSQQLPLPRQETPPPSQQAPPFSLTQPLSPVLEPSSEQMQYSPFLSQYQEMQLQPLPSTSGPRAAPPLPTQLQQQQPPPPPPPPPPRQPGAAPAPLQFSYQTCELPSAASPAPDYPTPCQYPVDGAQQSDLTGPDCPRSPGLQEAPSSYDPLALSELPGLFDCEMLDAVDPQHNGYVLVN.

The Protein kinase domain maps to 20–271 (YDIEGTLGKG…IAQIKEHKWM (252 aa)). T25 is subject to Phosphothreonine. ATP contacts are provided by residues 26 to 34 (LGKGNFAVV) and K49. At K53 the chain carries N6-acetyllysine; by EP300. The active-site Proton acceptor is D142. The residue at position 175 (T175) is a Phosphothreonine; by LKB1. In terms of domain architecture, UBA spans 295 to 335 (EFNEQVLRLMHSLGIDQQKTIESLQNKSYNHFAAIYFLLVE). T484 is subject to Phosphothreonine. 2 positions are modified to phosphoserine: S534 and S587. Low complexity-rich tracts occupy residues 644 to 659 (SSCP…ESVS) and 742 to 756 (SSYP…LPRQ). Disordered regions lie at residues 644-666 (SSCP…ASVH), 742-776 (SSYP…PLSP), and 801-896 (PLPS…SSYD). Polar residues predominate over residues 765–774 (APPFSLTQPL). Positions 822–834 (QPPPPPPPPPPRQ) are enriched in pro residues.

It belongs to the protein kinase superfamily. CAMK Ser/Thr protein kinase family. SNF1 subfamily. In terms of assembly, interacts with and phosphorylates TORC2/CRTC2. Mg(2+) is required as a cofactor. In terms of processing, phosphorylated at Thr-175 by STK11/LKB1 in complex with STE20-related adapter-alpha (STRADA) pseudo kinase and CAB39. Phosphorylated at Thr-484 in response to insulin in adipocytes. Post-translationally, acetylation at Lys-53 inhibits kinase activity. Deacetylated by HDAC6.

It is found in the cytoplasm. Its subcellular location is the endoplasmic reticulum membrane. The enzyme catalyses L-seryl-[protein] + ATP = O-phospho-L-seryl-[protein] + ADP + H(+). It carries out the reaction L-threonyl-[protein] + ATP = O-phospho-L-threonyl-[protein] + ADP + H(+). With respect to regulation, activated by phosphorylation on Thr-175. Its function is as follows. Serine/threonine-protein kinase that plays a role in many biological processes such as fatty acid oxidation, autophagy, immune response or glucose metabolism. Phosphorylates 'Ser-794' of IRS1 in insulin-stimulated adipocytes, potentially modulating the efficiency of insulin signal transduction. Inhibits CREB activity by phosphorylating and repressing TORCs, the CREB-specific coactivators. Phosphorylates EP300 and thus inhibits its histone acetyltransferase activity. In turn, regulates the DNA-binding ability of several transcription factors such as PPARA or MLXIPL. Also plays a role in thymic T-cell development. This Homo sapiens (Human) protein is Serine/threonine-protein kinase SIK2 (SIK2).